A 758-amino-acid polypeptide reads, in one-letter code: 5-methyltetrahydropteroyltriglutamate--homocysteine methyltransferase (758 aa).

5-methyltetrahydropteroyltri-L-glutamate is bound by residues 17–20 (RELK) and lysine 110. Residues 428 to 430 (IGS) and glutamate 481 each bind L-homocysteine. Residues 428–430 (IGS) and glutamate 481 each bind L-methionine. 5-methyltetrahydropteroyltri-L-glutamate-binding positions include 512-513 (RC) and tryptophan 558. Aspartate 596 is a binding site for L-homocysteine. Residue aspartate 596 participates in L-methionine binding. Glutamate 602 provides a ligand contact to 5-methyltetrahydropteroyltri-L-glutamate. Zn(2+) is bound by residues histidine 638, cysteine 640, and glutamate 662. Residue histidine 691 is the Proton donor of the active site. Residue cysteine 723 participates in Zn(2+) binding.

This sequence belongs to the vitamin-B12 independent methionine synthase family. It depends on Zn(2+) as a cofactor.

It catalyses the reaction 5-methyltetrahydropteroyltri-L-glutamate + L-homocysteine = tetrahydropteroyltri-L-glutamate + L-methionine. Its pathway is amino-acid biosynthesis; L-methionine biosynthesis via de novo pathway; L-methionine from L-homocysteine (MetE route): step 1/1. Functionally, catalyzes the transfer of a methyl group from 5-methyltetrahydrofolate to homocysteine resulting in methionine formation. This chain is 5-methyltetrahydropteroyltriglutamate--homocysteine methyltransferase, found in Thermosynechococcus vestitus (strain NIES-2133 / IAM M-273 / BP-1).